A 577-amino-acid chain; its full sequence is Type I restriction enzyme MjaVII methylase subunit (577 aa).

Residues 251–256 (EVYTPV), 281–283 (SGT), E306, and 335–336 (DS) each bind S-adenosyl-L-methionine.

Belongs to the N4/N6-methyltransferase family. The type I restriction/modification system is composed of three polypeptides R, M and S.

The enzyme catalyses a 2'-deoxyadenosine in DNA + S-adenosyl-L-methionine = an N(6)-methyl-2'-deoxyadenosine in DNA + S-adenosyl-L-homocysteine + H(+). Its function is as follows. The subtype gamma methyltransferase (M) subunit of a type I restriction enzyme. The M and S subunits together form a methyltransferase (MTase) that methylates A-3 on the top and bottom strands of the sequence 5'-CAAN(7)TGG-3'. In the presence of the R subunit the complex can also act as an endonuclease, binding to the same target sequence but cutting the DNA some distance from this site. Whether the DNA is cut or modified depends on the methylation state of the target sequence. When the target site is unmodified, the DNA is cut. When the target site is hemimethylated, the complex acts as a maintenance MTase modifying the DNA so that both strands become methylated. After locating a non-methylated recognition site, the enzyme complex serves as a molecular motor that translocates DNA in an ATP-dependent manner until a collision occurs that triggers cleavage. In Methanocaldococcus jannaschii (strain ATCC 43067 / DSM 2661 / JAL-1 / JCM 10045 / NBRC 100440) (Methanococcus jannaschii), this protein is Type I restriction enzyme MjaVII methylase subunit.